A 1068-amino-acid polypeptide reads, in one-letter code: tRNA wybutosine-synthesizing protein 4 (1068 aa).

The interval 1–31 (MCPPEQPAKAMAPSKSNQAAKSAVPTKEEKS) is disordered. S-adenosyl-L-methionine-binding positions include Arg81, Gly107, Asp134, 181–182 (DL), and Glu208. A JmjC domain is found at 876–1024 (ADFPSLSSDF…ALGRDVYGNR (149 aa)).

This sequence belongs to the methyltransferase superfamily. LCMT family.

It catalyses the reaction 7-[(3S)-3-amino-3-carboxypropyl]wyosine(37) in tRNA(Phe) + S-adenosyl-L-methionine = 7-[(3S)-(3-amino-3-methoxycarbonyl)propyl]wyosine(37) in tRNA(Phe) + S-adenosyl-L-homocysteine. The catalysed reaction is 7-[(3S)-(3-amino-3-methoxycarbonyl)propyl]wyosine(37) in tRNA(Phe) + S-adenosyl-L-methionine + CO2 = wybutosine(37) in tRNA(Phe) + S-adenosyl-L-homocysteine + 2 H(+). It functions in the pathway tRNA modification; wybutosine-tRNA(Phe) biosynthesis. Probable S-adenosyl-L-methionine-dependent methyltransferase that acts as a component of the wybutosine biosynthesis pathway. Wybutosine is a hyper modified guanosine with a tricyclic base found at the 3'-position adjacent to the anticodon of eukaryotic phenylalanine tRNA. May methylate the carboxyl group of leucine residues to form alpha-leucine ester residues. The chain is tRNA wybutosine-synthesizing protein 4 (ppm2) from Emericella nidulans (strain FGSC A4 / ATCC 38163 / CBS 112.46 / NRRL 194 / M139) (Aspergillus nidulans).